Reading from the N-terminus, the 1442-residue chain is Sulfite reductase [NADPH] subunit beta (1442 aa).

Positions 682–831 (LHVYYASDGG…AYSEWEPKLW (150 aa)) constitute a Flavodoxin-like domain. Residue serine 903 is modified to Phosphoserine. Residues cysteine 1300, cysteine 1306, cysteine 1345, and cysteine 1349 each coordinate [4Fe-4S] cluster. Cysteine 1349 is a siroheme binding site.

Belongs to the nitrite and sulfite reductase 4Fe-4S domain family. Alpha(2)-beta(2). The alpha component is a flavoprotein, the beta component is a hemoprotein. Siroheme is required as a cofactor. Requires [4Fe-4S] cluster as cofactor.

The protein localises to the cytoplasm. It carries out the reaction hydrogen sulfide + 3 NADP(+) + 3 H2O = sulfite + 3 NADPH + 4 H(+). Its pathway is sulfur metabolism; hydrogen sulfide biosynthesis; hydrogen sulfide from sulfite (NADPH route): step 1/1. Its function is as follows. Catalyzes the reduction of sulfite to sulfide, one of several activities required for the biosynthesis of L-cysteine from sulfate. This is Sulfite reductase [NADPH] subunit beta (MET5) from Saccharomyces cerevisiae (strain ATCC 204508 / S288c) (Baker's yeast).